The following is a 330-amino-acid chain: MASSLAQSRISNLQNHLSPLEANNKLRSLVKISPQVSEALSNGRAVVALESTIISHGMPYPQNLQTAKEVESIVRENGAIPATIAILNGVPCIGLSEEELERLASLGKSVQKTAGRDIANVVATRGNGATTVSATLFFASMVGIQVFVTGGIGGVHRHANHSMDISSDLTALGRTPIAVISAGVKSILDIPKTLEYLETQEVYVAAYKSDEFPAFFTEKSGCKAPSRVNSPEDCARVIDANMKLNRQAGILFAIPIPKHHSAAGNLIESATQRALTEAREQNVTGNAETPFLLARVNELTGGTSLAANIALVKNNALIGSQIAVALSQLM.

Catalysis depends on E50, which acts as the Proton donor. Substrate contacts are provided by K112 and V132. Mn(2+) is bound at residue D164. 166-168 (SSD) contributes to the substrate binding site. The Nucleophile role is filled by K185.

Belongs to the pseudouridine-5'-phosphate glycosidase family. In terms of assembly, homotrimer. Mn(2+) is required as a cofactor.

It is found in the peroxisome. It catalyses the reaction D-ribose 5-phosphate + uracil = psi-UMP + H2O. Functionally, catalyzes the reversible cleavage of pseudouridine 5'-phosphate (PsiMP) to ribose 5-phosphate and uracil. Functions biologically in the cleavage direction, as part of a pseudouridine degradation pathway. Acts together with the pseudouridine kinase PUKI in the peroxisome to prevent toxic pseudouridine monophosphate accumulation. Can catalyze the formation of pseudouridine 5'-phosphate (reverse reaction) in vitro, with a catalytic efficiency 4 times lower than the hydrolysis reaction. This chain is Pseudouridine-5'-phosphate glycosidase, found in Arabidopsis thaliana (Mouse-ear cress).